We begin with the raw amino-acid sequence, 291 residues long: Early E4 34 kDa protein (291 aa).

The protein belongs to the adenoviridae E4 30 to 34 kDa protein family. As to quaternary structure, interacts with E1B-55k.

The protein resides in the host nucleus. It is found in the host cytoplasm. Its function is as follows. Plays a major role to prevent cellular inhibition of viral genome replication by nuclear bodies. Assembles an SCF-like E3 ubiquitin ligase complex based on the cellular proteins ELOB, ELOC, CUL5 and RBX1, in cooperation with viral E1B-55K. This viral RING-type ligase ubiquitinates cellular substrates prior to proteasomal degradation: p53/TP53, LIG4, MRE11-RAD50-NBS1 (MRN) complex, ITGA3, DAXX and BLM. The polypeptide is Early E4 34 kDa protein (Homo sapiens (Human)).